The sequence spans 887 residues: Leucine--tRNA ligase (887 aa).

The 'HIGH' region signature appears at 48-58; that stretch reads PYPSGKLHMGH. Residues 644–648 carry the 'KMSKS' region motif; sequence TMSKS. ATP is bound at residue lysine 647.

Belongs to the class-I aminoacyl-tRNA synthetase family.

Its subcellular location is the cytoplasm. The enzyme catalyses tRNA(Leu) + L-leucine + ATP = L-leucyl-tRNA(Leu) + AMP + diphosphate. This chain is Leucine--tRNA ligase, found in Leptothrix cholodnii (strain ATCC 51168 / LMG 8142 / SP-6) (Leptothrix discophora (strain SP-6)).